The sequence spans 275 residues: Exosome complex component RRP40 (275 aa).

Position 2 is an N-acetylalanine (Ala-2). A Glycyl lysine isopeptide (Lys-Gly) (interchain with G-Cter in SUMO2) cross-link involves residue Lys-151.

Belongs to the RRP40 family. Component of the RNA exosome core complex (Exo-9), composed of EXOSC1, EXOSC2, EXOSC3, EXOSC4, EXOSC5, EXOSC6, EXOSC7, EXOSC8 and EXOSC9; within the complex interacts with EXOSC5 and EXOSC9. The catalytically inactive RNA exosome core complex (Exo-9) associates with the catalytic subunit EXOSC10/RRP6. Exo-9 may associate with DIS3 to form the nucleolar exosome complex, or DIS3L to form the cytoplasmic exosome complex. Exo-9 is formed by a hexameric base ring consisting of the heterodimers EXOSC4-EXOSC9, EXOSC5-EXOSC8 and EXOSC6-EXOSC7, and a cap ring consisting of EXOSC1, EXOSC2 and EXOSC3. The RNA exosome complex associates with cofactors C1D/RRP47, MPHOSPH6/MPP6 and MTREX/MTR4. Interacts with MPHOSPH6/MPP6; the interaction is direct. Interacts with GTPBP1. Interacts with ZC3HAV1. Interacts with DDX17 only in the presence of ZC3HAV1 in an RNA-independent manner. Interacts with DHX36; this interaction occurs in a RNase-insensitive manner. Interacts with HBS1L isoform 2.

The protein resides in the cytoplasm. It localises to the nucleus. Its subcellular location is the nucleolus. Non-catalytic component of the RNA exosome complex which has 3'-&gt;5' exoribonuclease activity and participates in a multitude of cellular RNA processing and degradation events. In the nucleus, the RNA exosome complex is involved in proper maturation of stable RNA species such as rRNA, snRNA and snoRNA, in the elimination of RNA processing by-products and non-coding 'pervasive' transcripts, such as antisense RNA species and promoter-upstream transcripts (PROMPTs), and of mRNAs with processing defects, thereby limiting or excluding their export to the cytoplasm. The RNA exosome may be involved in Ig class switch recombination (CSR) and/or Ig variable region somatic hypermutation (SHM) by targeting AICDA deamination activity to transcribed dsDNA substrates. In the cytoplasm, the RNA exosome complex is involved in general mRNA turnover and specifically degrades inherently unstable mRNAs containing AU-rich elements (AREs) within their 3' untranslated regions, and in RNA surveillance pathways, preventing translation of aberrant mRNAs. It seems to be involved in degradation of histone mRNA. The catalytic inactive RNA exosome core complex of 9 subunits (Exo-9) is proposed to play a pivotal role in the binding and presentation of RNA for ribonucleolysis, and to serve as a scaffold for the association with catalytic subunits and accessory proteins or complexes. EXOSC3 as peripheral part of the Exo-9 complex stabilizes the hexameric ring of RNase PH-domain subunits through contacts with EXOSC9 and EXOSC5. The chain is Exosome complex component RRP40 (EXOSC3) from Bos taurus (Bovine).